Reading from the N-terminus, the 313-residue chain is Formimidoylglutamase (313 aa).

The Mn(2+) site is built by H130, D155, H157, D159, D241, and D243.

It belongs to the arginase family. Mn(2+) is required as a cofactor.

The catalysed reaction is N-formimidoyl-L-glutamate + H2O = formamide + L-glutamate. Its pathway is amino-acid degradation; L-histidine degradation into L-glutamate; L-glutamate from N-formimidoyl-L-glutamate (hydrolase route): step 1/1. Its function is as follows. Catalyzes the conversion of N-formimidoyl-L-glutamate to L-glutamate and formamide. The sequence is that of Formimidoylglutamase from Salmonella arizonae (strain ATCC BAA-731 / CDC346-86 / RSK2980).